A 363-amino-acid polypeptide reads, in one-letter code: Des-methyl DIF-1 methyltransferase A (363 aa).

S-adenosyl-L-methionine is bound by residues Gly195, Asp221, Asp250, Leu251, and Lys266. Catalysis depends on His270, which acts as the Proton acceptor.

Belongs to the class I-like SAM-binding methyltransferase superfamily. Cation-independent O-methyltransferase family. COMT subfamily.

The catalysed reaction is (3,5-dichloro-2,4,6-trihydroxyphenyl)hexan-1-one + S-adenosyl-L-methionine = 1-(3,5-dichloro-2,6-dihydroxy-4-methoxyphenyl)hexan-1-one + S-adenosyl-L-homocysteine + H(+). O-methyltransferase; part of the gene cluster that mediates the biosynthesis of DIF-1 (Differentiation Inducing Factor-1), a signal molecule involved in the differentiation of pstO (prestalk-O) cells. The three-step process begins with the formation of (2,4,6-trihydroxyphenyl)-1-hexan-1-one (THPH) by the polyketide synthase StlB. THPH is then dichlorinated by the flavin-dependent halogenase ChlA. The last step of DIF-1 biosynthesis is the O-methylation of dichloro-THPH (or des-methyl-DIF-1) by the methyltransferase DmtA to yield DIF-1. In Dictyostelium discoideum (Social amoeba), this protein is Des-methyl DIF-1 methyltransferase A.